The sequence spans 82 residues: Large ribosomal subunit protein bL31B (82 aa).

The protein belongs to the bacterial ribosomal protein bL31 family. Type B subfamily. Part of the 50S ribosomal subunit.

In Acinetobacter baylyi (strain ATCC 33305 / BD413 / ADP1), this protein is Large ribosomal subunit protein bL31B.